The following is a 136-amino-acid chain: Transcription antitermination protein NusB (136 aa).

The protein belongs to the NusB family.

Involved in transcription antitermination. Required for transcription of ribosomal RNA (rRNA) genes. Binds specifically to the boxA antiterminator sequence of the ribosomal RNA (rrn) operons. This Pseudoalteromonas translucida (strain TAC 125) protein is Transcription antitermination protein NusB.